The following is a 500-amino-acid chain: Organic cation/carnitine transporter 7 (500 aa).

Residues 1 to 23 (MADGNTRFTVDEALVAMGFGKFQ) lie on the Cytoplasmic side of the membrane. A helical membrane pass occupies residues 24–44 (IYVLAYAGMGWVAEAMEMMLL). Over 45–62 (SFVGPAVQSLWNLSARQE) the chain is Extracellular. Residue N56 is glycosylated (N-linked (GlcNAc...) asparagine). Residues 63–83 (SLITSVVFAGMLIGAYSWGIV) form a helical membrane-spanning segment. At 84–97 (SDKHGRRKGFIITA) the chain is on the cytoplasmic side. Residues 98-118 (VVTFVAGFLSAFSPNYMWLII) traverse the membrane as a helical segment. At 119–120 (LR) the chain is on the extracellular side. Residues 121–141 (CLVGLGLGGGPVLASWYLEFI) form a helical membrane-spanning segment. 137-144 (YLEFIPAP) contributes to the ATP binding site. Residues 142-150 (PAPSRGTWM) are Cytoplasmic-facing. Residues 151 to 171 (VVFSAFWTVGTIFEASLAWLV) form a helical membrane-spanning segment. Over 172–174 (MPR) the chain is Extracellular. Residues 175–195 (LGWRWLLAFSSVPSSLLLLFY) form a helical membrane-spanning segment. Over 196–293 (RWTSESPRYL…ALLSPTLMKR (98 aa)) the chain is Cytoplasmic. A helical membrane pass occupies residues 294-314 (TLLLWVVFFGNAFAYYGVVLL). Residues 315–341 (TTELNNSHNRCYPTEKQLRNSNDVNYR) are Extracellular-facing. A glycan (N-linked (GlcNAc...) asparagine) is linked at N319. The helical transmembrane segment at 342 to 362 (DVFIASFAEFPGLLISAAMVD) threads the bilayer. The Cytoplasmic segment spans residues 363–367 (RLGRK). The chain crosses the membrane as a helical span at residues 368–387 (ASMASMLFTCCIFLLPLLSH). Residues 388-401 (QSPFITTVLLFGGR) lie on the Extracellular side of the membrane. Residues 402–422 (ICISAAFTVVYIYAPEIYPTA) traverse the membrane as a helical segment. At 423 to 429 (VRTTGVG) the chain is on the cytoplasmic side. Residues 430–450 (VGSSVGRIGGILCPLVAVGLV) traverse the membrane as a helical segment. Topologically, residues 451–456 (HGCHQT) are extracellular. The chain crosses the membrane as a helical span at residues 457–477 (IAVLLFEVVILVSGICVCLFP). Residues 478–500 (FETSGRDLTDSISASKEPPSASV) lie on the Cytoplasmic side of the membrane.

The protein belongs to the major facilitator (TC 2.A.1) superfamily. Organic cation transporter (TC 2.A.1.19) family. As to expression, expressed in pollen.

It is found in the membrane. High affinity carnitine transporter involved in the active cellular uptake of carnitine. Also transports organic cations. The polypeptide is Organic cation/carnitine transporter 7 (OCT7) (Arabidopsis thaliana (Mouse-ear cress)).